The sequence spans 327 residues: G protein pathway suppressor 2 (327 aa).

Residues 14–109 (MARALHRHIM…RRRKEQSDLT (96 aa)) are a coiled coil. Positions 26 to 65 (RERKRQEEEEVDKMMEQKMKEEQERRKKKEMEERMSLEET) are disordered. Residues K45 and K71 each participate in a glycyl lysine isopeptide (Lys-Gly) (interchain with G-Cter in SUMO1) cross-link. Positions 61–94 (SLEETKEQILKLQEKLSALQEEKHQLFLQLKKVL) are interaction with SUMO. Disordered stretches follow at residues 178–208 (GQFQ…SPSQ), 253–285 (QKQM…APGL), and 300–327 (KSGF…FYHK). The span at 253 to 271 (QKQMEHANQQTSFSDSSSL) shows a compositional bias: polar residues. An Asymmetric dimethylarginine modification is found at R312. Residues 317–327 (QHSQNPRFYHK) show a composition bias toward polar residues. R323 is subject to Asymmetric dimethylarginine; alternate. Position 323 is an omega-N-methylarginine; alternate (R323).

In terms of assembly, component of the N-Cor repressor complex, at least composed of NCOR1, NCOR2, HDAC3, TBL1X, TBL1R, CORO2A and GPS2. Interacts (when sumoylated at Lys-71) with TBL1X; leading to protect GPS2 from degradation by the proteasome. Interacts with UBE2N; leading to inhibit UBE2N/Ubc13 activity. Interacts with TRAF1. Interacts with TRAF2. Interacts with TRAF6. Interacts with PPARG (when in the liganded conformation). Interacts with (sumoylated) NR1H2; interaction with sumoylated NR1H2 and NR5A2 onto hepatic acute phase protein promoters prevents N-Cor corepressor complex dissociation. Interacts with (sumoylated) NR5A2; interaction with sumoylated NR1H2 and NR5A2 onto hepatic acute phase protein promoters prevents N-Cor corepressor complex dissociation. Interacts with NR1H3. Interacts with RFX4. Interacts with ANKRD26. Sumoylation regulates its subcellular location. Sumoylation at Lys-45 and Lys-71 regulates the shuttling between the cytoplasm and the nucleus. Sumoylation at Lys-71 is required for interaction with TBL1X. Sumoylated at Lys-45 and Lys-71 in mitochondrion. Desumoylation by SENP1 leads to relocation from the mitochondria to the nucleus. Post-translationally, ubiquitinated at the C-terminus by SIAH2; leading to its degradation by the proteasome. Interaction with TBL1X and methylation at Arg-323 protect GPS2 against ubiquitination and degradation. In terms of processing, methylated at Arg-312 and Arg-323 by PRMT6. Methylation at Arg-323 protects from degradation by the proteasome.

The protein resides in the nucleus. The protein localises to the mitochondrion. Its subcellular location is the cytoplasm. It localises to the cytosol. In terms of biological role, key regulator of inflammation, lipid metabolism and mitochondrion homeostasis that acts by inhibiting the activity of the ubiquitin-conjugating enzyme UBE2N/Ubc13, thereby inhibiting 'Lys-63'-linked ubiquitination. In the nucleus, can both acts as a corepressor and coactivator of transcription, depending on the context. Acts as a transcription coactivator in adipocytes by promoting the recruitment of PPARG to promoters: acts by inhibiting the activity of the ubiquitin-conjugating enzyme UBE2N/Ubc13, leading to stabilization of KDM4A and subsequent histone H3 'Lys-9' (H3K9) demethylation. Promotes cholesterol efflux by acting as a transcription coactivator. Acts as a regulator of B-cell development by inhibiting UBE2N/Ubc13, thereby restricting the activation of Toll-like receptors (TLRs) and B-cell antigen receptors (BCRs) signaling pathways. Acts as a key mediator of mitochondrial stress response: in response to mitochondrial depolarization, relocates from the mitochondria to the nucleus following desumoylation and specifically promotes expression of nuclear-encoded mitochondrial genes. Promotes transcription of nuclear-encoded mitochondrial genes by inhibiting UBE2N/Ubc13. Can also act as a corepressor as part of the N-Cor repressor complex by repressing active PPARG. Plays an anti-inflammatory role in macrophages and is required for insulin sensitivity by acting as a corepressor. Plays an anti-inflammatory role during the hepatic acute phase response by interacting with sumoylated NR1H2 and NR5A2 proteins, thereby preventing N-Cor corepressor complex dissociation. In the cytosol, also plays a non-transcriptional role by regulating insulin signaling and pro-inflammatory pathways. In the cytoplasm, acts as a negative regulator of inflammation by inhibiting the pro-inflammatory TNF-alpha pathway; acts by repressing UBE2N/Ubc13 activity. In the cytoplasm of adipocytes, restricts the activation of insulin signaling via inhibition of UBE2N/Ubc13-mediated ubiquitination of AKT. Able to suppress G-protein- and mitogen-activated protein kinase-mediated signal transduction. This Mus musculus (Mouse) protein is G protein pathway suppressor 2.